Consider the following 293-residue polypeptide: Aminodeoxychorismate lyase (293 aa).

The residue at position 146 (Lys-146) is an N6-(pyridoxal phosphate)lysine.

This sequence belongs to the class-IV pyridoxal-phosphate-dependent aminotransferase family. As to quaternary structure, homodimer. Pyridoxal 5'-phosphate is required as a cofactor.

The catalysed reaction is 4-amino-4-deoxychorismate = 4-aminobenzoate + pyruvate + H(+). Its pathway is cofactor biosynthesis; tetrahydrofolate biosynthesis; 4-aminobenzoate from chorismate: step 2/2. Functionally, involved in the biosynthesis of p-aminobenzoate (PABA), a precursor of tetrahydrofolate. Converts 4-amino-4-deoxychorismate into 4-aminobenzoate (PABA) and pyruvate. This Bacillus subtilis (strain 168) protein is Aminodeoxychorismate lyase.